Reading from the N-terminus, the 372-residue chain is Aminodeoxyfutalosine synthase (372 aa).

The Radical SAM core domain maps to 53 to 292 (HKTYFVHSIR…VARLYLDNFP (240 aa)). [4Fe-4S] cluster is bound by residues C69, C73, and C76.

It belongs to the radical SAM superfamily. MqnE family. [4Fe-4S] cluster serves as cofactor.

The enzyme catalyses 3-[(1-carboxyvinyl)-oxy]benzoate + S-adenosyl-L-methionine + H2O = 6-amino-6-deoxyfutalosine + hydrogencarbonate + L-methionine + H(+). The protein operates within quinol/quinone metabolism; menaquinone biosynthesis. Functionally, radical SAM enzyme that catalyzes the addition of the adenosyl radical to the double bond of 3-[(1-carboxyvinyl)oxy]benzoate, leading to aminodeoxyfutalosine (AFL), a key intermediate in the formation of menaquinone (MK, vitamin K2) from chorismate. The chain is Aminodeoxyfutalosine synthase from Thermus thermophilus (strain ATCC 27634 / DSM 579 / HB8).